Consider the following 4592-residue polypeptide: Intermembrane lipid transfer protein vps13D (4592 aa).

The Chorein N-terminal domain maps to 3 to 102 (FESVVAEVID…SSTNVSSNYS (100 aa)). Disordered regions lie at residues 95-142 (TNVS…TASQ), 157-199 (LDKK…IDSQ), 286-307 (STTS…SSSS), 445-529 (KKDD…IKGI), 574-605 (SNST…LSPM), 826-861 (NYNN…QQGI), 1040-1083 (TTSP…KRQW), 1219-1249 (YFKN…EKKP), 1655-1717 (QQQE…QQSN), 1855-1886 (SNNN…NSLF), 1971-2001 (TSSL…TTTS), 2025-2056 (PLIN…EQQQ), and 2245-2270 (NNNN…NIIN). Composition is skewed to low complexity over residues 117–139 (SSSN…TTST) and 172–199 (KSTN…IDSQ). Residues 437–517 (KNATIKLNKK…KKKEEKGKSK (81 aa)) adopt a coiled-coil conformation. The span at 445–457 (KKDDKKDDKKDDI) shows a compositional bias: basic and acidic residues. A compositionally biased stretch (low complexity) spans 458–474 (NSSSSSIGSSNSSNNTP). Residues 475–529 (TKDKNKEKEKDKEKEKEKEKKKEKEKLKLEEKKKKKEEKGKSKSKDSKKNKIKGI) show a composition bias toward basic and acidic residues. Positions 574-591 (SNSTTTNNSNNNSSSSPN) are enriched in low complexity. A compositionally biased stretch (polar residues) spans 592–603 (ILATSPSNNSLS). Over residues 829-838 (NQSSSSSSSS) the composition is skewed to low complexity. The span at 1040 to 1059 (TTSPTFNSLNNKPSTLQNNH) shows a compositional bias: polar residues. Over residues 1064–1076 (NGNSSNNNNTDSP) the composition is skewed to low complexity. Positions 1234–1244 (NTEDDEQEEEE) are enriched in acidic residues. Low complexity-rich tracts occupy residues 1669–1689 (KSIN…LRKS) and 1702–1715 (QQQQ…QQQQ). A compositionally biased stretch (low complexity) spans 2037–2048 (SKSSSSKSSSSK). The stretch at 2321-2354 (TLQINDLGANIISIGNKSTSIKCFLRSIRLSDSR) is one TPR 1 repeat. 7 disordered regions span residues 2456 to 2489 (KTNN…SIST), 2862 to 2882 (AVST…NNNG), 3006 to 3035 (GEQK…SSSS), 3106 to 3129 (NSSG…SSSN), 3356 to 3384 (KLPT…KRTT), 3560 to 3580 (NSLK…HRHN), and 3630 to 3679 (STNH…SKLK). Low complexity-rich tracts occupy residues 2458-2478 (NNNN…NNNN), 2864-2880 (STSN…SNNN), and 3015-3035 (TSTS…SSSS). Low complexity predominate over residues 3358–3384 (PTSPQTSSSSSPPPATTTTSTTTKRTT). The span at 3569 to 3580 (KSKKQQQQHRHN) shows a compositional bias: basic residues. Residues 3640–3679 (SSTFNNSSNDNINNGNSNNNTSNSLSPPSSSSSINLSKLK) show a composition bias toward low complexity. Residues 3789–3822 (EVPKPYLGRVDIKDNDTHTSIHFYDQDTEYSPFR) form a TPR 2 repeat. Low complexity-rich tracts occupy residues 3872–3894 (TTTT…NNNN) and 4111–4135 (QQLQ…NPIN). Disordered stretches follow at residues 3872–3897 (TTTT…NQYI) and 4105–4135 (KKHK…NPIN).

Its subcellular location is the membrane. In terms of biological role, mediates the transfer of lipids between membranes at organelle contact sites. The polypeptide is Intermembrane lipid transfer protein vps13D (vps13D) (Dictyostelium discoideum (Social amoeba)).